The primary structure comprises 953 residues: Catenin alpha-2 (953 aa).

Thr632 carries the post-translational modification Phosphothreonine. A phosphoserine mark is found at Ser640, Ser651, and Ser901. Residues 912–927 (EKKPLVKREKPEEFQT) show a composition bias toward basic and acidic residues. The segment at 912–939 (EKKPLVKREKPEEFQTRVRRGSQKKHIS) is disordered. The span at 928-938 (RVRRGSQKKHI) shows a compositional bias: basic residues. Phosphoserine is present on Ser939.

This sequence belongs to the vinculin/alpha-catenin family. In terms of assembly, interacts with CDH1 and CDH2. Interacts with ZNF639; recruits CTNNA2 to the nucleus. Interacts with F-actin. As to expression, expressed in neural tissues, with strongest expression in fetal and adult brain. Expressed in the developing cortical plate and marginal zone of 20-week-old human fetal brain.

It is found in the cell membrane. It localises to the cytoplasm. The protein localises to the cytoskeleton. The protein resides in the cell junction. Its subcellular location is the adherens junction. It is found in the cell projection. It localises to the axon. The protein localises to the nucleus. May function as a linker between cadherin adhesion receptors and the cytoskeleton to regulate cell-cell adhesion and differentiation in the nervous system. Required for proper regulation of cortical neuronal migration and neurite growth. It acts as a negative regulator of Arp2/3 complex activity and Arp2/3-mediated actin polymerization. It thereby suppresses excessive actin branching which would impair neurite growth and stability. Regulates morphological plasticity of synapses and cerebellar and hippocampal lamination during development. Functions in the control of startle modulation. This is Catenin alpha-2 (CTNNA2) from Homo sapiens (Human).